We begin with the raw amino-acid sequence, 257 residues long: Probable amino-acid ABC transporter ATP-binding protein y4tH (257 aa).

The ABC transporter domain occupies 6 to 251 (IVFDKVKKAY…PKEERTREFL (246 aa)). Residue 38 to 45 (GPSGSGKS) coordinates ATP.

This sequence belongs to the ABC transporter superfamily.

It localises to the cell inner membrane. In terms of biological role, probably part of a binding-protein-dependent transport system y4tEFGH for an amino acid. Probably responsible for energy coupling to the transport system. The chain is Probable amino-acid ABC transporter ATP-binding protein y4tH from Sinorhizobium fredii (strain NBRC 101917 / NGR234).